A 105-amino-acid chain; its full sequence is DNA-directed RNA polymerases I and III subunit RPAC2 (105 aa).

The protein belongs to the archaeal Rpo11/eukaryotic RPB11/RPC19 RNA polymerase subunit family. In terms of assembly, component of the RNA polymerase I (Pol I) and RNA polymerase III (Pol III) complexes consisting of at least 13 and 17 subunits, respectively.

The protein resides in the nucleus. DNA-dependent RNA polymerase catalyzes the transcription of DNA into RNA using the four ribonucleoside triphosphates as substrates. Common core component of RNA polymerases I and III which synthesize ribosomal RNA precursors and small RNAs, such as 5S rRNA and tRNAs, respectively. This chain is DNA-directed RNA polymerases I and III subunit RPAC2, found in Drosophila melanogaster (Fruit fly).